A 99-amino-acid chain; its full sequence is SAGA-associated factor 11 (99 aa).

The SGF11-type zinc-finger motif lies at 71–92; sequence FYCENCGREVSGNRFAAHLQRC.

The protein belongs to the SGF11 family. In terms of assembly, component of the 1.8 MDa SAGA transcription coactivator-HAT complex. SAGA is built of 5 distinct domains with specialized functions. Within the SAGA complex, SUS1, SGF11, SGF73 and UBP8 form an additional subcomplex of SAGA called the DUB module (deubiquitination module). Interacts directly with SGF73, SUS1 and UBP8.

It is found in the nucleus. Functionally, functions as a component of the transcription regulatory histone acetylation (HAT) complex SAGA. At the promoters, SAGA is required for recruitment of the basal transcription machinery. It influences RNA polymerase II transcriptional activity through different activities such as TBP interaction and promoter selectivity, interaction with transcription activators, and chromatin modification through histone acetylation and deubiquitination. SAGA acetylates nucleosomal histone H3 to some extent (to form H3K9ac, H3K14ac, H3K18ac and H3K23ac). SAGA interacts with DNA via upstream activating sequences (UASs). Involved in transcriptional regulation of a subset of SAGA-regulated genes. Within the SAGA complex, participates in a subcomplex, that specifically deubiquitinates histones H2B. The sequence is that of SAGA-associated factor 11 from Candida glabrata (strain ATCC 2001 / BCRC 20586 / JCM 3761 / NBRC 0622 / NRRL Y-65 / CBS 138) (Yeast).